The chain runs to 405 residues: Arginine biosynthesis bifunctional protein ArgJ (405 aa).

Substrate is bound by residues threonine 152, lysine 178, threonine 189, glutamate 276, asparagine 400, and threonine 405. Catalysis depends on threonine 189, which acts as the Nucleophile.

It belongs to the ArgJ family. In terms of assembly, heterotetramer of two alpha and two beta chains.

The protein resides in the cytoplasm. The enzyme catalyses N(2)-acetyl-L-ornithine + L-glutamate = N-acetyl-L-glutamate + L-ornithine. The catalysed reaction is L-glutamate + acetyl-CoA = N-acetyl-L-glutamate + CoA + H(+). The protein operates within amino-acid biosynthesis; L-arginine biosynthesis; L-ornithine and N-acetyl-L-glutamate from L-glutamate and N(2)-acetyl-L-ornithine (cyclic): step 1/1. Its pathway is amino-acid biosynthesis; L-arginine biosynthesis; N(2)-acetyl-L-ornithine from L-glutamate: step 1/4. Its function is as follows. Catalyzes two activities which are involved in the cyclic version of arginine biosynthesis: the synthesis of N-acetylglutamate from glutamate and acetyl-CoA as the acetyl donor, and of ornithine by transacetylation between N(2)-acetylornithine and glutamate. In Pseudomonas aeruginosa (strain ATCC 15692 / DSM 22644 / CIP 104116 / JCM 14847 / LMG 12228 / 1C / PRS 101 / PAO1), this protein is Arginine biosynthesis bifunctional protein ArgJ.